A 282-amino-acid chain; its full sequence is Succinate dehydrogenase [ubiquinone] iron-sulfur subunit, mitochondrial (282 aa).

Residues 1-30 constitute a mitochondrion transit peptide; sequence MAAVVGVSLKRGFSATALGRVGLQFQACRE. K53 and K57 each carry N6-acetyllysine. The 80-residue stretch at 56–135 folds into the 2Fe-2S ferredoxin-type domain; the sequence is DKPRMQTYKV…VSKIYPLPHM (80 aa). Residues C95, C100, C103, and C115 each coordinate [2Fe-2S] cluster. The interaction with SDHAF1 stretch occupies residues 148 to 220; it reads FYAQYKSIEP…PAVLMQAYRW (73 aa). Residues 178 to 208 form the 4Fe-4S ferredoxin-type domain; the sequence is DREKLDGLYECILCACCSTSCPSYWWNGDKY. C188, C191, and C194 together coordinate [4Fe-4S] cluster. C198 is a [3Fe-4S] cluster binding site. W203 contributes to the a ubiquinone binding site. Residues C245 and C251 each contribute to the [3Fe-4S] cluster site. Residue C255 coordinates [4Fe-4S] cluster.

The protein belongs to the succinate dehydrogenase/fumarate reductase iron-sulfur protein family. In terms of assembly, component of complex II composed of four subunits: the flavoprotein (FP) SDHA, iron-sulfur protein (IP) SDHB, and a cytochrome b560 composed of SDHC and SDHD. Interacts with SDHAF1; the interaction is required for iron-sulfur cluster incorporation into SDHB. It depends on [2Fe-2S] cluster as a cofactor. [3Fe-4S] cluster serves as cofactor. Requires [4Fe-4S] cluster as cofactor.

It is found in the mitochondrion inner membrane. The enzyme catalyses a quinone + succinate = fumarate + a quinol. It carries out the reaction (R)-malate + a quinone = enol-oxaloacetate + a quinol. It catalyses the reaction (S)-malate + a quinone = enol-oxaloacetate + a quinol. It participates in carbohydrate metabolism; tricarboxylic acid cycle; fumarate from succinate (eukaryal route): step 1/1. Enol-oxaloacetate inhibits the succinate dehydrogenase activity. Iron-sulfur protein (IP) subunit of the succinate dehydrogenase complex (mitochondrial respiratory chain complex II), responsible for transferring electrons from succinate to ubiquinone (coenzyme Q). SDH also oxidizes malate to the non-canonical enol form of oxaloacetate, enol-oxaloacetate. Enol-oxaloacetate, which is a potent inhibitor of the succinate dehydrogenase activity, is further isomerized into keto-oxaloacetate. This Rattus norvegicus (Rat) protein is Succinate dehydrogenase [ubiquinone] iron-sulfur subunit, mitochondrial (Sdhb).